The chain runs to 165 residues: Large ribosomal subunit protein uL5 (165 aa).

This sequence belongs to the universal ribosomal protein uL5 family. Part of the 50S ribosomal subunit; contacts the 5S rRNA and probably tRNA. Forms a bridge to the 30S subunit in the 70S ribosome.

Its function is as follows. This is one of the proteins that bind and probably mediate the attachment of the 5S RNA into the large ribosomal subunit, where it forms part of the central protuberance. In the 70S ribosome it contacts protein S13 of the 30S subunit (bridge B1b), connecting the 2 subunits; this bridge is implicated in subunit movement. May contact the P site tRNA; the 5S rRNA and some of its associated proteins might help stabilize positioning of ribosome-bound tRNAs. This chain is Large ribosomal subunit protein uL5, found in Methanosarcina acetivorans (strain ATCC 35395 / DSM 2834 / JCM 12185 / C2A).